Here is a 248-residue protein sequence, read N- to C-terminus: Phosphoribosylformylglycinamidine synthase subunit PurQ (248 aa).

Positions 6 to 248 (AMVLRMEGTN…IFFRILYNST (243 aa)) constitute a Glutamine amidotransferase type-1 domain. The active-site Nucleophile is Cys-95. Active-site residues include His-215 and Glu-217.

As to quaternary structure, part of the FGAM synthase complex composed of 1 PurL, 1 PurQ and 2 PurS subunits.

The protein localises to the cytoplasm. The enzyme catalyses N(2)-formyl-N(1)-(5-phospho-beta-D-ribosyl)glycinamide + L-glutamine + ATP + H2O = 2-formamido-N(1)-(5-O-phospho-beta-D-ribosyl)acetamidine + L-glutamate + ADP + phosphate + H(+). It catalyses the reaction L-glutamine + H2O = L-glutamate + NH4(+). The protein operates within purine metabolism; IMP biosynthesis via de novo pathway; 5-amino-1-(5-phospho-D-ribosyl)imidazole from N(2)-formyl-N(1)-(5-phospho-D-ribosyl)glycinamide: step 1/2. Its function is as follows. Part of the phosphoribosylformylglycinamidine synthase complex involved in the purines biosynthetic pathway. Catalyzes the ATP-dependent conversion of formylglycinamide ribonucleotide (FGAR) and glutamine to yield formylglycinamidine ribonucleotide (FGAM) and glutamate. The FGAM synthase complex is composed of three subunits. PurQ produces an ammonia molecule by converting glutamine to glutamate. PurL transfers the ammonia molecule to FGAR to form FGAM in an ATP-dependent manner. PurS interacts with PurQ and PurL and is thought to assist in the transfer of the ammonia molecule from PurQ to PurL. This chain is Phosphoribosylformylglycinamidine synthase subunit PurQ, found in Picrophilus torridus (strain ATCC 700027 / DSM 9790 / JCM 10055 / NBRC 100828 / KAW 2/3).